Consider the following 90-residue polypeptide: MTDDQTRRSAGASRRRFGARRKVCAFCADKIRVVDYKDVKRLQRCMSERGKILPRRRTGVCARHQRSLTVAIKRARHMALLPFVAAHMHS.

It belongs to the bacterial ribosomal protein bS18 family. As to quaternary structure, part of the 30S ribosomal subunit. Forms a tight heterodimer with protein bS6.

Binds as a heterodimer with protein bS6 to the central domain of the 16S rRNA, where it helps stabilize the platform of the 30S subunit. In Roseiflexus castenholzii (strain DSM 13941 / HLO8), this protein is Small ribosomal subunit protein bS18A.